We begin with the raw amino-acid sequence, 1400 residues long: DNA-directed RNA polymerase subunit beta' (1400 aa).

Residues C71, C73, C86, and C89 each contribute to the Zn(2+) site. Mg(2+) contacts are provided by D462, D464, and D466. Zn(2+)-binding residues include C811, C885, C892, and C895.

The protein belongs to the RNA polymerase beta' chain family. As to quaternary structure, the RNAP catalytic core consists of 2 alpha, 1 beta, 1 beta' and 1 omega subunit. When a sigma factor is associated with the core the holoenzyme is formed, which can initiate transcription. It depends on Mg(2+) as a cofactor. Requires Zn(2+) as cofactor.

The catalysed reaction is RNA(n) + a ribonucleoside 5'-triphosphate = RNA(n+1) + diphosphate. Its function is as follows. DNA-dependent RNA polymerase catalyzes the transcription of DNA into RNA using the four ribonucleoside triphosphates as substrates. This chain is DNA-directed RNA polymerase subunit beta', found in Brucella abortus (strain S19).